The chain runs to 355 residues: Cobalt-precorrin-5B C(1)-methyltransferase (355 aa).

Belongs to the CbiD family.

The enzyme catalyses Co-precorrin-5B + S-adenosyl-L-methionine = Co-precorrin-6A + S-adenosyl-L-homocysteine. The protein operates within cofactor biosynthesis; adenosylcobalamin biosynthesis; cob(II)yrinate a,c-diamide from sirohydrochlorin (anaerobic route): step 6/10. In terms of biological role, catalyzes the methylation of C-1 in cobalt-precorrin-5B to form cobalt-precorrin-6A. The sequence is that of Cobalt-precorrin-5B C(1)-methyltransferase from Parasynechococcus marenigrum (strain WH8102).